Here is a 260-residue protein sequence, read N- to C-terminus: Cytosolic Fe-S cluster assembly factor Nubp2 homolog (260 aa).

ATP is bound at residue 14–21 (GKGGVGKS). [4Fe-4S] cluster-binding residues include Cys-188 and Cys-191.

This sequence belongs to the Mrp/NBP35 ATP-binding proteins family. NUBP2/CFD1 subfamily. Heterotetramer of 2 Nubp1 and 2 Nubp2 chains. Requires [4Fe-4S] cluster as cofactor.

It is found in the cytoplasm. In terms of biological role, component of the cytosolic iron-sulfur (Fe/S) protein assembly (CIA) machinery. Required for maturation of extramitochondrial Fe-S proteins. The Nubp1-Nubp2 heterotetramer forms a Fe-S scaffold complex, mediating the de novo assembly of an Fe-S cluster and its transfer to target apoproteins. This Drosophila simulans (Fruit fly) protein is Cytosolic Fe-S cluster assembly factor Nubp2 homolog.